Consider the following 384-residue polypeptide: Putative sarcosine oxidase (384 aa).

6–36 provides a ligand contact to FAD; the sequence is DVVVVGAGIFGSCTAYNCQKIGLKTLLLEQF. C315 bears the S-8alpha-FAD cysteine mark.

Belongs to the MSOX/MTOX family. The cofactor is FAD.

It carries out the reaction sarcosine + O2 + H2O = formaldehyde + glycine + H2O2. This is Putative sarcosine oxidase from Caenorhabditis elegans.